Reading from the N-terminus, the 632-residue chain is Nucleoside triphosphatase I (632 aa).

The region spanning 42–204 is the Helicase ATP-binding domain; it reads FLGLDKMHSL…VMLVNLLRPK (163 aa). 55–62 serves as a coordination point for ATP; the sequence is HETGVGKT. Positions 141–144 match the DEXH box motif; the sequence is DECH. Residues 367–532 enclose the Helicase C-terminal domain; sequence KFTDVCLRIL…EFTQLFKVFK (166 aa). The binding to the cap-specific mRNA (nucleoside-2'-O-)-methyltransferase stretch occupies residues 457–524; that stretch reads DIFILDMTWN…DIIRTKSKEF (68 aa).

Belongs to the helicase family. NPH I subfamily. Monomer. Interacts (via C-terminus) with RAP94 (via N-terminus). Interacts with the cap-specific mRNA (nucleoside-2'-O-)-methyltransferase.

It localises to the virion. It carries out the reaction a ribonucleoside 5'-triphosphate + H2O = a ribonucleoside 5'-diphosphate + phosphate + H(+). Its function is as follows. DNA-dependent ATPase required for providing the needed energy to achieve the termination of early transcripts. Acts in concert with the RAP94 subunit of the virion RNA polymerase and the capping enzyme/VTF to catalyze release of UUUUUNU-containing nascent RNA from the elongation complex. NPH-I must bind ssDNA in order to exhibit ATPase activity. This Myxoma virus (strain Lausanne) (MYXV) protein is Nucleoside triphosphatase I (NPH1).